We begin with the raw amino-acid sequence, 279 residues long: Gas vesicle protein L2 (279 aa).

The protein belongs to the gas vesicle GvpF/GvpL family. GvpF to GvpM interact with each other in vitro, and may form multi-subunit complex(es). Interacts with GvpC, GvpN and GvpO.

Its subcellular location is the gas vesicle. In terms of biological role, proteins GvpF to GvpM might be involved in nucleating gas vesicle formation. A minor component of the gas vesicle. Gas vesicles are hollow, gas filled proteinaceous nanostructures found in several microbial planktonic microorganisms. They allow positioning of halobacteria at the optimal depth for growth in the poorly aerated, shallow brine pools of their habitat. Expression of 2 c-vac DNA fragments containing 2 divergently transcribed regions (gvpE-gvpF-gvpG-gvpH-gvpI-gvpJ-gvpK-gvpL-gvpM and gvpA-gvpC-gvpN-gvpO) allows H.volcanii to produce gas vesicles. This chain is Gas vesicle protein L2, found in Halobacterium salinarum (strain ATCC 700922 / JCM 11081 / NRC-1) (Halobacterium halobium).